The following is a 142-amino-acid chain: Small ribosomal subunit protein uS12 (142 aa).

The segment at 1-44 (MANGKYAARKLKQDRQQRRWSDSEYARRERGLGAKSDPLEGAPQ) is disordered. Basic and acidic residues predominate over residues 11–32 (LKQDRQQRRWSDSEYARRERGL).

It belongs to the universal ribosomal protein uS12 family. As to quaternary structure, part of the 30S ribosomal subunit.

With S4 and S5 plays an important role in translational accuracy. Located at the interface of the 30S and 50S subunits. This is Small ribosomal subunit protein uS12 from Haloquadratum walsbyi (strain DSM 16790 / HBSQ001).